Here is a 281-residue protein sequence, read N- to C-terminus: MLAKVTFLSCITMSDFTFSGYELACFVTHSGLSRSAGHILSQCANLAATTSEYFIHKPHRLIAAETGYSQSTVVRAFREAVNKGILSVEIVIGDHRERRANLYRFTPSFLAFAQQAKNALIESKLKISSAATKVKAVLAKTLALFNFLSTPPCQNDTPSPCQDDVAIKNKKSQVKKTKRSVSGGAGTTSLKKLTSWIAKAKAKADNLRLSKKRTQKHEFKQKVEAAARKYAYLKNKRSPDIGGISNFDNLPHCMTVNEALNAVLAKNKDNEQWGIPAGFRG.

Functionally, essential for L-replicon function. Necessary for initiation of DNA replication from the L-replicon at oriL. The polypeptide is Replication protein repL (repL) (Enterobacteriaceae (Bacteriophage P1)).